The following is a 197-amino-acid chain: Xanthine phosphoribosyltransferase (197 aa).

Xanthine-binding residues include Leu-20 and Asn-27. A 5-phospho-alpha-D-ribose 1-diphosphate-binding site is contributed by 128–132 (ANGQA). Lys-156 is a binding site for xanthine.

This sequence belongs to the purine/pyrimidine phosphoribosyltransferase family. Xpt subfamily. In terms of assembly, homodimer.

It is found in the cytoplasm. The enzyme catalyses XMP + diphosphate = xanthine + 5-phospho-alpha-D-ribose 1-diphosphate. It functions in the pathway purine metabolism; XMP biosynthesis via salvage pathway; XMP from xanthine: step 1/1. Functionally, converts the preformed base xanthine, a product of nucleic acid breakdown, to xanthosine 5'-monophosphate (XMP), so it can be reused for RNA or DNA synthesis. The chain is Xanthine phosphoribosyltransferase from Bacillus cereus (strain G9842).